The primary structure comprises 837 residues: Anaphase-promoting complex subunit 4 (837 aa).

Low complexity-rich tracts occupy residues 59–81 and 547–581; these read NDNN…NDNN and SSSS…NNNN. Disordered regions lie at residues 59–89 and 547–588; these read NDNN…KSNK and SSSS…QSGN.

This sequence belongs to the APC4 family. As to quaternary structure, the APC/C is composed of at least 13 subunits that stay tightly associated throughout the cell cycle: anapc1, anapc2, anapc3, anapc4, anapc5, anapc6, anapc7, anapc8, anapc10, anapc11, cdc20, cdc26 and cdh1.

It localises to the nucleus. It participates in protein modification; protein ubiquitination. Component of the anaphase promoting complex/cyclosome (APC/C), a cell cycle-regulated E3 ubiquitin-protein ligase complex that controls progression through mitosis and the G1 phase of the cell cycle. The polypeptide is Anaphase-promoting complex subunit 4 (anapc4) (Dictyostelium discoideum (Social amoeba)).